We begin with the raw amino-acid sequence, 336 residues long: Holliday junction branch migration complex subunit RuvB (336 aa).

A large ATPase domain (RuvB-L) region spans residues 1–182 (MKERIVNLET…FGMSFRMQFY (182 aa)). ATP is bound by residues leucine 21, arginine 22, glycine 63, lysine 66, threonine 67, serine 68, 129–131 (EDF), arginine 172, tyrosine 182, and arginine 219. Residue threonine 67 participates in Mg(2+) binding. The segment at 183–253 (SPSELALIIK…ITLHALNELG (71 aa)) is small ATPAse domain (RuvB-S). Residues 256-336 (ELGFDEADLA…IPTLKSQSLF (81 aa)) form a head domain (RuvB-H) region. DNA-binding residues include arginine 310 and arginine 315.

Belongs to the RuvB family. As to quaternary structure, homohexamer. Forms an RuvA(8)-RuvB(12)-Holliday junction (HJ) complex. HJ DNA is sandwiched between 2 RuvA tetramers; dsDNA enters through RuvA and exits via RuvB. An RuvB hexamer assembles on each DNA strand where it exits the tetramer. Each RuvB hexamer is contacted by two RuvA subunits (via domain III) on 2 adjacent RuvB subunits; this complex drives branch migration. In the full resolvosome a probable DNA-RuvA(4)-RuvB(12)-RuvC(2) complex forms which resolves the HJ.

It is found in the cytoplasm. It catalyses the reaction ATP + H2O = ADP + phosphate + H(+). Its function is as follows. The RuvA-RuvB-RuvC complex processes Holliday junction (HJ) DNA during genetic recombination and DNA repair, while the RuvA-RuvB complex plays an important role in the rescue of blocked DNA replication forks via replication fork reversal (RFR). RuvA specifically binds to HJ cruciform DNA, conferring on it an open structure. The RuvB hexamer acts as an ATP-dependent pump, pulling dsDNA into and through the RuvAB complex. RuvB forms 2 homohexamers on either side of HJ DNA bound by 1 or 2 RuvA tetramers; 4 subunits per hexamer contact DNA at a time. Coordinated motions by a converter formed by DNA-disengaged RuvB subunits stimulates ATP hydrolysis and nucleotide exchange. Immobilization of the converter enables RuvB to convert the ATP-contained energy into a lever motion, pulling 2 nucleotides of DNA out of the RuvA tetramer per ATP hydrolyzed, thus driving DNA branch migration. The RuvB motors rotate together with the DNA substrate, which together with the progressing nucleotide cycle form the mechanistic basis for DNA recombination by continuous HJ branch migration. Branch migration allows RuvC to scan DNA until it finds its consensus sequence, where it cleaves and resolves cruciform DNA. In Helicobacter acinonychis (strain Sheeba), this protein is Holliday junction branch migration complex subunit RuvB.